Reading from the N-terminus, the 92-residue chain is Small ribosomal subunit protein uS19 (92 aa).

Belongs to the universal ribosomal protein uS19 family.

Its function is as follows. Protein S19 forms a complex with S13 that binds strongly to the 16S ribosomal RNA. This Borrelia duttonii (strain Ly) protein is Small ribosomal subunit protein uS19.